We begin with the raw amino-acid sequence, 282 residues long: Shikimate dehydrogenase (NADP(+)) (282 aa).

Shikimate contacts are provided by residues 15 to 17 (SKS) and Thr-62. The Proton acceptor role is filled by Lys-66. The shikimate site is built by Asn-87 and Asp-103. NADP(+) contacts are provided by residues 127-131 (GAGGA), 151-156 (NRTHTK), and Met-220. Tyr-222 contributes to the shikimate binding site. Gly-244 is an NADP(+) binding site.

The protein belongs to the shikimate dehydrogenase family. Homodimer.

The catalysed reaction is shikimate + NADP(+) = 3-dehydroshikimate + NADPH + H(+). Its pathway is metabolic intermediate biosynthesis; chorismate biosynthesis; chorismate from D-erythrose 4-phosphate and phosphoenolpyruvate: step 4/7. In terms of biological role, involved in the biosynthesis of the chorismate, which leads to the biosynthesis of aromatic amino acids. Catalyzes the reversible NADPH linked reduction of 3-dehydroshikimate (DHSA) to yield shikimate (SA). The protein is Shikimate dehydrogenase (NADP(+)) of Shewanella baltica (strain OS195).